Reading from the N-terminus, the 73-residue chain is MAKKEDTLVLEGKVEELLPGMHFRVILENGMPVTAHLCGKMRMSNIRLLVGDRVTVEMSAYDLTKARVVYRHR.

Positions 1-73 (MAKKEDTLVL…TKARVVYRHR (73 aa)) constitute an S1-like domain.

It belongs to the IF-1 family. Component of the 30S ribosomal translation pre-initiation complex which assembles on the 30S ribosome in the order IF-2 and IF-3, IF-1 and N-formylmethionyl-tRNA(fMet); mRNA recruitment can occur at any time during PIC assembly.

The protein resides in the cytoplasm. In terms of biological role, one of the essential components for the initiation of protein synthesis. Stabilizes the binding of IF-2 and IF-3 on the 30S subunit to which N-formylmethionyl-tRNA(fMet) subsequently binds. Helps modulate mRNA selection, yielding the 30S pre-initiation complex (PIC). Upon addition of the 50S ribosomal subunit IF-1, IF-2 and IF-3 are released leaving the mature 70S translation initiation complex. The protein is Translation initiation factor IF-1 of Chlamydia pneumoniae (Chlamydophila pneumoniae).